Here is a 312-residue protein sequence, read N- to C-terminus: Glycerol-3-phosphate dehydrogenase [NAD(P)+] (312 aa).

NADPH contacts are provided by Trp-11, Arg-30, Arg-31, and Lys-95. Residues Lys-95, Gly-123, and Ser-125 each contribute to the sn-glycerol 3-phosphate site. Ala-127 provides a ligand contact to NADPH. Sn-glycerol 3-phosphate contacts are provided by Lys-177, Asp-230, Ser-240, Arg-241, and Asn-242. Lys-177 (proton acceptor) is an active-site residue. An NADPH-binding site is contributed by Arg-241. The NADPH site is built by Val-265 and Glu-267.

Belongs to the NAD-dependent glycerol-3-phosphate dehydrogenase family.

The protein localises to the cytoplasm. The enzyme catalyses sn-glycerol 3-phosphate + NAD(+) = dihydroxyacetone phosphate + NADH + H(+). The catalysed reaction is sn-glycerol 3-phosphate + NADP(+) = dihydroxyacetone phosphate + NADPH + H(+). It functions in the pathway membrane lipid metabolism; glycerophospholipid metabolism. Catalyzes the reduction of the glycolytic intermediate dihydroxyacetone phosphate (DHAP) to sn-glycerol 3-phosphate (G3P), the key precursor for phospholipid synthesis. This chain is Glycerol-3-phosphate dehydrogenase [NAD(P)+], found in Helicobacter pylori (strain HPAG1).